The chain runs to 369 residues: Actin-related protein 2/3 complex subunit 1B-A (369 aa).

WD repeat units follow at residues 6–45 (FLLEPITCHAWNKDATQIAFCPNSHDVHIYKKDGDKWSKI), 50–89 (EHNGHVTGIDWAPESNRIVTCGTDRNAYVWTLKNNVWKPT), 94–135 (RINR…WVCK), 140–179 (PIRSTVLSLDWHPNNVLLAAGSSDFKSRIFSAYIKEVEER), 200–239 (SSCGWVHSVCFSHSGDRMAWVSHDSTICISDATKKMRVTS), 242–282 (TDTL…LSFG), and 321–364 (LHKN…SAMK).

This sequence belongs to the WD repeat ARPC1 family. As to quaternary structure, component of the Arp2/3 complex composed of actr2/arp2, actr3/arp3, arpc1 (arpc1a or arpc1b), arpc2, arpc3, arpc4 and arpc5.

It localises to the cytoplasm. It is found in the cytoskeleton. The protein resides in the nucleus. Functionally, component of the Arp2/3 complex, a multiprotein complex that mediates actin polymerization upon stimulation by nucleation-promoting factor (NPF). The Arp2/3 complex mediates the formation of branched actin networks in the cytoplasm, providing the force for cell motility. In addition to its role in the cytoplasmic cytoskeleton, the Arp2/3 complex also promotes actin polymerization in the nucleus, thereby regulating gene transcription and repair of damaged DNA. The Arp2/3 complex promotes homologous recombination (HR) repair in response to DNA damage by promoting nuclear actin polymerization, leading to drive motility of double-strand breaks (DSBs). This chain is Actin-related protein 2/3 complex subunit 1B-A (arpc1b-a), found in Xenopus laevis (African clawed frog).